The chain runs to 2192 residues: Non-reducing polyketide synthase 1 (2192 aa).

The tract at residues 5–243 (LLLGDQTADQ…VSIPIYAPYH (239 aa)) is N-terminal acylcarrier protein transacylase domain (SAT). In terms of domain architecture, Ketosynthase family 3 (KS3) spans 374–806 (NDKIAIVGMS…GGNTSLLLED (433 aa)). Catalysis depends on for beta-ketoacyl synthase activity residues C546, H681, and H724. The interval 905–1218 (FCFTGQGSQY…ANSMCALFLA (314 aa)) is malonyl-CoA:ACP transacylase (MAT) domain. S993 acts as the For acyl/malonyl transferase activity in catalysis. Positions 1293–1610 (SCQKIIDEEF…RKVLNTFLPP (318 aa)) are product template (PT) domain. Residues 1295-1430 (QKIIDEEFSA…CTVKFEDINT (136 aa)) are N-terminal hotdog fold. The PKS/mFAS DH domain occupies 1295-1605 (QKIIDEEFSA…FQKIPRKVLN (311 aa)). The Proton acceptor; for dehydratase activity role is filled by H1327. Residues 1458–1605 (AHVIGRGLAY…FQKIPRKVLN (148 aa)) form a C-terminal hotdog fold region. The active-site Proton donor; for dehydratase activity is D1518. The interval 1639–1668 (TQAQPAKAVPKQVTVAAPTPKAAPKKADLK) is disordered. A Carrier 1 domain is found at 1670–1747 (PAGPTIITRV…EMKKFFSQYD (78 aa)). An O-(pantetheine 4'-phosphoryl)serine modification is found at S1707. The disordered stretch occupies residues 1748–1788 (GEVGTPEQDDSDSDSETSGDASTPMSEVGTPMTIPSSAVSE). The span at 1754–1764 (EQDDSDSDSET) shows a compositional bias: acidic residues. Residues 1798-1875 (APASGEVSIA…DVENALDMRP (78 aa)) enclose the Carrier 2 domain. An O-(pantetheine 4'-phosphoryl)serine modification is found at S1835. The segment at 1913–2164 (SKYPAATSVL…SMMKPPHVSI (252 aa)) is thioesterase (TE) domain.

Functionally, non-reducing polyketide synthase; part of the gene cluster that mediates the biosynthesis of elsinochromes, pigments consisting of at least four interconvertible tautomers (A, B, C and D) that have a core phenolic quinone to which various side chains are attached and which play an important role in fungal pathogenesis. The non-reducing polyketide synthase PKS1 was proposed to iteratively catalyze decarboxylation between acetyl-CoA and malonyl-CoA subunits for polyketide chain elongation. The released polyketide undergoes cyclization to form an aromatic ring, and proceeds via serial modification steps to produce the heptaketide back- bone of elsinochrome. As elsinochrome has a symmetrical structure, two identical heptaketides are fused to form a core 1,2-dihydrobenzo-perylene ring structure, which can then be successively modified to produce the various derivatives of elsinochrome. Some of these reactions may be cooperatively carried out, at least in part, by the products of RDT1, OXR1 and PKS1. PRF1, embedded within the elsinochrome cluster possibly functions to stabilize some of the biosynthetic enzymes required for elsinochrome production. As prefoldin is a hexamer containing 2 a and 4 b subunits, additional prefoldin subunits, whose coding genes may not immediately link to the elsinochrome biosynthetic gene cluster, are required to fulfill the chaperone function. In addition, no methyltransferase-coding gene exists within the biosynthetic gene cluster, even though elsinochrome has four methyl groups at positions C3, C7, C8 and C12. Apparently, the identified gene cluster does not contain the entire entourage of genes responsible for elsinochrome biosynthesis. Once elsinochrome is synthesized, it must be exported outside the fungal cells, which is probably accomplished by the ECT1 transporter, to avoid toxicity. This Elsinoe fawcettii (Citrus scab fungus) protein is Non-reducing polyketide synthase 1.